The sequence spans 456 residues: GTPase Der (456 aa).

EngA-type G domains lie at 2–167 (LKVA…DQFG) and 176–351 (ATFC…AQLK). GTP contacts are provided by residues 8-15 (GKPNVGKS), 55-59 (DTGGL), 118-121 (NKIE), 182-189 (GKPNVGKS), 229-233 (DTAGI), and 294-297 (NKWD). The 85-residue stretch at 352-436 (IKISTSLLND…PITLYFKSKN (85 aa)) folds into the KH-like domain.

Belongs to the TRAFAC class TrmE-Era-EngA-EngB-Septin-like GTPase superfamily. EngA (Der) GTPase family. Associates with the 50S ribosomal subunit.

GTPase that plays an essential role in the late steps of ribosome biogenesis. The polypeptide is GTPase Der (Mycoplasmoides gallisepticum (strain R(low / passage 15 / clone 2)) (Mycoplasma gallisepticum)).